A 485-amino-acid polypeptide reads, in one-letter code: Cysteine--tRNA ligase (485 aa).

A Zn(2+)-binding site is contributed by C27. Residues I29–H39 carry the 'HIGH' region motif. Zn(2+) is bound by residues C208, H233, and E237. The short motif at K265–S269 is the 'KMSKS' region element. Residue K268 coordinates ATP.

It belongs to the class-I aminoacyl-tRNA synthetase family. As to quaternary structure, monomer. It depends on Zn(2+) as a cofactor.

The protein localises to the cytoplasm. The enzyme catalyses tRNA(Cys) + L-cysteine + ATP = L-cysteinyl-tRNA(Cys) + AMP + diphosphate. In Solidesulfovibrio magneticus (strain ATCC 700980 / DSM 13731 / RS-1) (Desulfovibrio magneticus), this protein is Cysteine--tRNA ligase.